We begin with the raw amino-acid sequence, 920 residues long: Glutamate receptor 2.2 (920 aa).

Residues 1 to 24 (MKNSKLFFRFLFLFFFFCLESSRG) form the signal peptide. Residues 25-580 (QDNGKTQVNI…DKFSFLKPLS (556 aa)) lie on the Extracellular side of the membrane. N-linked (GlcNAc...) asparagine glycosylation is found at asparagine 53, asparagine 204, asparagine 267, asparagine 331, asparagine 342, asparagine 477, and asparagine 542. Residues 581-601 (IELWLTTLVFFFLVGISVWTL) form a helical membrane-spanning segment. At 602–610 (EHRVNSDFR) the chain is on the cytoplasmic side. The chain crosses the membrane as a helical span at residues 611–631 (GPANYQASTIFWFAFSTMVFA). Residues 632–635 (PRER) are Cytoplasmic-facing. The helical transmembrane segment at 636–656 (VLSFGARSLVVTWYFVLLVLT) threads the bilayer. The Extracellular portion of the chain corresponds to 657-830 (QSYTASLASL…VTAIQLGVGS (174 aa)). N-linked (GlcNAc...) asparagine glycosylation occurs at asparagine 702. A helical transmembrane segment spans residues 831–851 (FWFLFLVVFVVCVLALGKFTF). Topologically, residues 852–920 (CFLWKTKGKD…QVNQTDPDCL (69 aa)) are cytoplasmic.

The protein belongs to the glutamate-gated ion channel (TC 1.A.10.1) family. In terms of assembly, may form heteromers. In terms of tissue distribution, expressed predominantly in roots.

The protein localises to the membrane. In terms of biological role, glutamate-gated receptor that probably acts as a non-selective cation channel. May be involved in light-signal transduction and calcium homeostasis via the regulation of calcium influx into cells. In Arabidopsis thaliana (Mouse-ear cress), this protein is Glutamate receptor 2.2 (GLR2.2).